The following is a 469-amino-acid chain: CBL-interacting serine/threonine-protein kinase 16 (469 aa).

The Protein kinase domain maps to 15-278 (YNIGRLLGTG…MSEIKMIPWF (264 aa)). ATP is bound by residues 21–29 (LGTGNFAKV) and K44. Residue D139 is the Proton acceptor of the active site. Residues 157 to 193 (DFGLSALMMPEGLGGRRGSSDDLLHTRCGTPAYVAPE) form an activation loop region. S161 bears the Phosphoserine mark. T182 bears the Phosphothreonine mark. A disordered region spans residues 290 to 320 (IDETIPSPPEPPTKKKKKDLNEKEDDGASPR). In terms of domain architecture, NAF spans 317-342 (ASPRSFNAFQFITSMSSGFDLSNLFE). Residues 346–376 (KPKRMFTSKFPAKSVKERLETAAREMDMRVK) are PPI. A disordered region spans residues 447–469 (DDEDDVTTNDNVDTNDNKINNVS). Positions 454–469 (TNDNVDTNDNKINNVS) are enriched in low complexity.

This sequence belongs to the protein kinase superfamily. CAMK Ser/Thr protein kinase family. SNF1 subfamily. As to quaternary structure, part of a K(+)-channel calcium-sensing kinase/phosphatase complex composed by a calcium sensor CBL (CBL1, CBL2, CBL3 or CBL9), a kinase CIPK (CIPK6, CIPK16 or CIPK23), a phosphatase PP2C (AIP1) and a K(+)-channel (AKT1). Interacts with AKT1, CBL1, CBL2, CBL3 and CBL9. Requires Mn(2+) as cofactor.

It catalyses the reaction L-seryl-[protein] + ATP = O-phospho-L-seryl-[protein] + ADP + H(+). The enzyme catalyses L-threonyl-[protein] + ATP = O-phospho-L-threonyl-[protein] + ADP + H(+). Functionally, CIPK serine-threonine protein kinases interact with CBL proteins. Binding of a CBL protein to the regulatory NAF domain of CIPK protein lead to the activation of the kinase in a calcium-dependent manner. Downstream of CBL1, CBL2, CBL3 and CBL9, regulates by phosphorylation the K(+) conductance and uptake of AKT1. In Arabidopsis thaliana (Mouse-ear cress), this protein is CBL-interacting serine/threonine-protein kinase 16 (CIPK16).